The primary structure comprises 719 residues: Protein ENHANCED DISEASE RESISTANCE 2-like (719 aa).

Residues 3-110 enclose the PH domain; sequence KVVYEGWMVR…WKEKIECVID (108 aa). The disordered stretch occupies residues 134-173; that stretch reads AGRTASSSDHESPFSALEDENDSQRDLLRRTTIGNGPPES. Residues 180–392 form the START domain; the sequence is EFDAELSNQS…VSGLREWFSQ (213 aa). The tract at residues 414 to 478 is disordered; that stretch reads ALGKGGKHHH…ETDAKKTEEP (65 aa). Residues 426 to 439 show a composition bias toward polar residues; sequence SLSIDQTNGASRNS. Residues 442 to 461 are compositionally biased toward acidic residues; that stretch reads MDEDSDDDDEFQIPDSEPEP. Basic and acidic residues predominate over residues 462-477; sequence ETSKQDQETDAKKTEE. Residues 665–685 traverse the membrane as a helical segment; the sequence is GVLGLVIGVITSLVVEMAFLV.

The protein localises to the endoplasmic reticulum membrane. It is found in the cell membrane. It localises to the endosome membrane. In terms of biological role, binds to phosphatidylinositol-4-phosphate (PtdIns(4)P). May regulate the salicylic acid- (SA-) mediated resistance to pathogens. This chain is Protein ENHANCED DISEASE RESISTANCE 2-like (EDR2L), found in Arabidopsis thaliana (Mouse-ear cress).